The chain runs to 214 residues: 3-demethoxyubiquinol 3-hydroxylase (214 aa).

Fe cation is bound by residues glutamate 63, glutamate 93, histidine 96, glutamate 145, glutamate 177, and histidine 180.

It belongs to the COQ7 family. Requires Fe cation as cofactor.

Its subcellular location is the cell membrane. The enzyme catalyses a 5-methoxy-2-methyl-3-(all-trans-polyprenyl)benzene-1,4-diol + AH2 + O2 = a 3-demethylubiquinol + A + H2O. It participates in cofactor biosynthesis; ubiquinone biosynthesis. In terms of biological role, catalyzes the hydroxylation of 2-nonaprenyl-3-methyl-6-methoxy-1,4-benzoquinol during ubiquinone biosynthesis. This Psychrobacter arcticus (strain DSM 17307 / VKM B-2377 / 273-4) protein is 3-demethoxyubiquinol 3-hydroxylase.